Here is a 145-residue protein sequence, read N- to C-terminus: D-aminoacyl-tRNA deacylase (145 aa).

Residues 137 to 138 (GP) carry the Gly-cisPro motif, important for rejection of L-amino acids motif.

This sequence belongs to the DTD family. Homodimer.

The protein resides in the cytoplasm. It carries out the reaction glycyl-tRNA(Ala) + H2O = tRNA(Ala) + glycine + H(+). It catalyses the reaction a D-aminoacyl-tRNA + H2O = a tRNA + a D-alpha-amino acid + H(+). Functionally, an aminoacyl-tRNA editing enzyme that deacylates mischarged D-aminoacyl-tRNAs. Also deacylates mischarged glycyl-tRNA(Ala), protecting cells against glycine mischarging by AlaRS. Acts via tRNA-based rather than protein-based catalysis; rejects L-amino acids rather than detecting D-amino acids in the active site. By recycling D-aminoacyl-tRNA to D-amino acids and free tRNA molecules, this enzyme counteracts the toxicity associated with the formation of D-aminoacyl-tRNA entities in vivo and helps enforce protein L-homochirality. This Shewanella oneidensis (strain ATCC 700550 / JCM 31522 / CIP 106686 / LMG 19005 / NCIMB 14063 / MR-1) protein is D-aminoacyl-tRNA deacylase.